A 193-amino-acid chain; its full sequence is MLPLTAAITAGGASSRFGSDKALALWQGRPLLDQVAAGLAACERRLLIAPPGKYALPGWETWPDTRPGEGPLAGLEVALTHAAPGWVAFTGVDNPALTSDYWLTLLAACRPGMSSVQALHPERGPQPLGALYHTALLPRVTGLLAAGERRLRLTAPAEQTVLVTGLGAHFFQNVNRPADLAELSGRGEESLEV.

GTP is bound by residues 9-11 (TAG), lysine 21, aspartate 64, and aspartate 93. Residue aspartate 93 participates in Mg(2+) binding.

The protein belongs to the MobA family. Mg(2+) serves as cofactor.

It is found in the cytoplasm. The enzyme catalyses Mo-molybdopterin + GTP + H(+) = Mo-molybdopterin guanine dinucleotide + diphosphate. Its function is as follows. Transfers a GMP moiety from GTP to Mo-molybdopterin (Mo-MPT) cofactor (Moco or molybdenum cofactor) to form Mo-molybdopterin guanine dinucleotide (Mo-MGD) cofactor. The chain is Probable molybdenum cofactor guanylyltransferase from Deinococcus radiodurans (strain ATCC 13939 / DSM 20539 / JCM 16871 / CCUG 27074 / LMG 4051 / NBRC 15346 / NCIMB 9279 / VKM B-1422 / R1).